A 274-amino-acid chain; its full sequence is Glutamate racemase (274 aa).

Substrate contacts are provided by residues 9 to 10 and 41 to 42; these read DS and YG. The Proton donor/acceptor role is filled by Cys-72. 73 to 74 contacts substrate; the sequence is NT. Residue Cys-184 is the Proton donor/acceptor of the active site. Substrate is bound at residue 185–186; that stretch reads TH.

This sequence belongs to the aspartate/glutamate racemases family.

The catalysed reaction is L-glutamate = D-glutamate. It functions in the pathway cell wall biogenesis; peptidoglycan biosynthesis. In terms of biological role, provides the (R)-glutamate required for cell wall biosynthesis. In Oceanobacillus iheyensis (strain DSM 14371 / CIP 107618 / JCM 11309 / KCTC 3954 / HTE831), this protein is Glutamate racemase.